Here is a 160-residue protein sequence, read N- to C-terminus: SsrA-binding protein (160 aa).

Belongs to the SmpB family.

The protein localises to the cytoplasm. Functionally, required for rescue of stalled ribosomes mediated by trans-translation. Binds to transfer-messenger RNA (tmRNA), required for stable association of tmRNA with ribosomes. tmRNA and SmpB together mimic tRNA shape, replacing the anticodon stem-loop with SmpB. tmRNA is encoded by the ssrA gene; the 2 termini fold to resemble tRNA(Ala) and it encodes a 'tag peptide', a short internal open reading frame. During trans-translation Ala-aminoacylated tmRNA acts like a tRNA, entering the A-site of stalled ribosomes, displacing the stalled mRNA. The ribosome then switches to translate the ORF on the tmRNA; the nascent peptide is terminated with the 'tag peptide' encoded by the tmRNA and targeted for degradation. The ribosome is freed to recommence translation, which seems to be the essential function of trans-translation. The chain is SsrA-binding protein from Mycobacterium bovis (strain ATCC BAA-935 / AF2122/97).